The primary structure comprises 218 residues: GTP cyclohydrolase 1 (218 aa).

Residues Cys-109, His-112, and Cys-180 each coordinate Zn(2+).

This sequence belongs to the GTP cyclohydrolase I family. As to quaternary structure, toroid-shaped homodecamer, composed of two pentamers of five dimers.

The enzyme catalyses GTP + H2O = 7,8-dihydroneopterin 3'-triphosphate + formate + H(+). It functions in the pathway cofactor biosynthesis; 7,8-dihydroneopterin triphosphate biosynthesis; 7,8-dihydroneopterin triphosphate from GTP: step 1/1. This chain is GTP cyclohydrolase 1 (folE), found in Haemophilus influenzae (strain ATCC 51907 / DSM 11121 / KW20 / Rd).